The sequence spans 171 residues: Superoxide dismutase [Cu-Zn] 2 (171 aa).

The N-terminal stretch at 1–20 is a signal peptide; sequence MKKLSGVLAGSLLLISASFS. Residues His67, His69, and His85 each contribute to the Cu cation site. A disulfide bond links Cys74 and Cys167. Residues His85, His93, His102, and Asp105 each coordinate Zn(2+). His147 provides a ligand contact to Cu cation.

The protein belongs to the Cu-Zn superoxide dismutase family. The cofactor is Cu cation. Zn(2+) serves as cofactor.

The enzyme catalyses 2 superoxide + 2 H(+) = H2O2 + O2. Destroys radicals which are normally produced within the cells and which are toxic to biological systems. This is Superoxide dismutase [Cu-Zn] 2 (sodC2) from Aquifex aeolicus (strain VF5).